A 93-amino-acid polypeptide reads, in one-letter code: Large ribosomal subunit protein uL23c (93 aa).

The protein belongs to the universal ribosomal protein uL23 family. As to quaternary structure, part of the 50S ribosomal subunit.

It is found in the plastid. The protein resides in the chloroplast. In terms of biological role, binds to 23S rRNA. This Adiantum capillus-veneris (Maidenhair fern) protein is Large ribosomal subunit protein uL23c (rpl23).